The following is a 779-amino-acid chain: Catalase-peroxidase (779 aa).

The segment at residues 148-270 (WHSAGTYRIT…LGAVQMGLIY (123 aa)) is a cross-link (tryptophyl-tyrosyl-methioninium (Trp-Tyr) (with M-296)). Catalysis depends on His-149, which acts as the Proton acceptor. The tryptophyl-tyrosyl-methioninium (Tyr-Met) (with W-148) cross-link spans 270–296 (YVNPEGPNGKPDPIAAAKDIRETFFRM). Heme b is bound at residue His-311.

This sequence belongs to the peroxidase family. Peroxidase/catalase subfamily. As to quaternary structure, homodimer or homotetramer. Heme b serves as cofactor. Formation of the three residue Trp-Tyr-Met cross-link is important for the catalase, but not the peroxidase activity of the enzyme.

The enzyme catalyses H2O2 + AH2 = A + 2 H2O. It catalyses the reaction 2 H2O2 = O2 + 2 H2O. Bifunctional enzyme with both catalase and broad-spectrum peroxidase activity. The protein is Catalase-peroxidase of Bradyrhizobium diazoefficiens (strain JCM 10833 / BCRC 13528 / IAM 13628 / NBRC 14792 / USDA 110).